The chain runs to 128 residues: Sulfurtransferase TusD (128 aa).

C78 serves as the catalytic Cysteine persulfide intermediate.

It belongs to the DsrE/TusD family. In terms of assembly, heterohexamer, formed by a dimer of trimers. The hexameric TusBCD complex contains 2 copies each of TusB, TusC and TusD. The TusBCD complex interacts with TusE.

It is found in the cytoplasm. Functionally, part of a sulfur-relay system required for 2-thiolation of 5-methylaminomethyl-2-thiouridine (mnm(5)s(2)U) at tRNA wobble positions. Accepts sulfur from TusA and transfers it in turn to TusE. This is Sulfurtransferase TusD from Escherichia coli O17:K52:H18 (strain UMN026 / ExPEC).